The sequence spans 151 residues: Kinetoplast-associated protein 1 (151 aa).

The propeptide occupies 1 to 9; it reads MLRVSVRSL. Positions 13-151 are disordered; that stretch reads ASSKAGSKAA…KKGAAKKAHK (139 aa). Composition is skewed to low complexity over residues 15–49, 70–91, and 101–111; these read SKAG…VPPV, AAAA…TPAK, and SKPSAPKQAAG. Basic residues predominate over residues 112–151; the sequence is KMRKAAGKAQRKIKAAARKAAPKKMAKSFGKKGAAKKAHK.

This sequence belongs to the KAP family. As to quaternary structure, associates with the kinetoplast DNA network.

The protein resides in the mitochondrion matrix. Its subcellular location is the kinetoplast. Its function is as follows. Histone H1-like DNA-binding protein involved in the organization and segregation of kinetoplast DNA (kDNA). The mitochondrial DNA of kinetoplastid protozoa consists of about 5,000 minicircles and 20 to 30 maxicircles. These circular DNAs are held together by catenation into a highly organized compact disk structure referred to as a kinetoplast DNA (kDNA) network. Binds preferentially to a specific fragment of minicircle DNA and is able to compact kDNA networks through DNA charge neutralization and condensation. In Crithidia fasciculata, this protein is Kinetoplast-associated protein 1 (KAP4).